The following is a 264-amino-acid chain: Thymidylate synthase (264 aa).

Residue Arg21 participates in dUMP binding. His51 contacts (6R)-5,10-methylene-5,6,7,8-tetrahydrofolate. Arg126 to Arg127 is a dUMP binding site. The active-site Nucleophile is Cys146. DUMP contacts are provided by residues Arg166–Asp169, Asn177, and His207–Tyr209. (6R)-5,10-methylene-5,6,7,8-tetrahydrofolate is bound at residue Asp169. Residue Ser263 coordinates (6R)-5,10-methylene-5,6,7,8-tetrahydrofolate.

Belongs to the thymidylate synthase family. Bacterial-type ThyA subfamily. Homodimer.

It localises to the cytoplasm. It carries out the reaction dUMP + (6R)-5,10-methylene-5,6,7,8-tetrahydrofolate = 7,8-dihydrofolate + dTMP. It functions in the pathway pyrimidine metabolism; dTTP biosynthesis. Its function is as follows. Catalyzes the reductive methylation of 2'-deoxyuridine-5'-monophosphate (dUMP) to 2'-deoxythymidine-5'-monophosphate (dTMP) while utilizing 5,10-methylenetetrahydrofolate (mTHF) as the methyl donor and reductant in the reaction, yielding dihydrofolate (DHF) as a by-product. This enzymatic reaction provides an intracellular de novo source of dTMP, an essential precursor for DNA biosynthesis. This chain is Thymidylate synthase, found in Neisseria meningitidis serogroup A / serotype 4A (strain DSM 15465 / Z2491).